We begin with the raw amino-acid sequence, 518 residues long: Probable bifunctional methylthioribulose-1-phosphate dehydratase/enolase-phosphatase E1 (518 aa).

The segment at 1 to 242 (MACCGGGRGE…AIKLYQLGID (242 aa)) is methylthioribulose-1-phosphate dehydratase. Cysteine 114 contributes to the substrate binding site. 2 residues coordinate Zn(2+): histidine 132 and histidine 134. The active-site Proton donor/acceptor; for methylthioribulose-1-phosphate dehydratase activity is the glutamate 157. Residue histidine 207 participates in Zn(2+) binding. The segment at 279–518 (VVLDIEGTTT…FRTIKSFSEI (240 aa)) is enolase-phosphatase E1. Mg(2+) contacts are provided by aspartate 282 and glutamate 284. Substrate-binding positions include 417–418 (SS) and lysine 451. Residue aspartate 477 coordinates Mg(2+).

It in the N-terminal section; belongs to the aldolase class II family. MtnB subfamily. In the C-terminal section; belongs to the HAD-like hydrolase superfamily. MasA/MtnC family. Zn(2+) is required as a cofactor. Requires Mg(2+) as cofactor.

It catalyses the reaction 5-(methylsulfanyl)-D-ribulose 1-phosphate = 5-methylsulfanyl-2,3-dioxopentyl phosphate + H2O. The catalysed reaction is 5-methylsulfanyl-2,3-dioxopentyl phosphate + H2O = 1,2-dihydroxy-5-(methylsulfanyl)pent-1-en-3-one + phosphate. It participates in amino-acid biosynthesis; L-methionine biosynthesis via salvage pathway; L-methionine from S-methyl-5-thio-alpha-D-ribose 1-phosphate: step 2/6. The protein operates within amino-acid biosynthesis; L-methionine biosynthesis via salvage pathway; L-methionine from S-methyl-5-thio-alpha-D-ribose 1-phosphate: step 3/6. It functions in the pathway amino-acid biosynthesis; L-methionine biosynthesis via salvage pathway; L-methionine from S-methyl-5-thio-alpha-D-ribose 1-phosphate: step 4/6. This is Probable bifunctional methylthioribulose-1-phosphate dehydratase/enolase-phosphatase E1 from Oryza sativa subsp. indica (Rice).